We begin with the raw amino-acid sequence, 215 residues long: Ependymin (215 aa).

A signal peptide spans 1–20; sequence MHTVKLLCVVFSCLCAVAWA. Asparagine 71 and asparagine 94 each carry an N-linked (GlcNAc...) asparagine glycan.

This sequence belongs to the ependymin family. In terms of assembly, forms disulfide-linked dimers. Binds calcium through the terminal sialic acids. In terms of tissue distribution, EPDs are synthesized in the meninx and secreted in the cerebrospinal fluid.

It is found in the secreted. Its function is as follows. May play a role in neural plasticity. May be involved during axon regeneration. This is Ependymin (epd) from Cyprinus carpio (Common carp).